A 203-amino-acid polypeptide reads, in one-letter code: Snake venom metalloproteinase fibrolase (203 aa).

A Pyrrolidone carboxylic acid modification is found at Q1. Residues 7–203 (RYVQLVIVAD…NNPQCILNKP (197 aa)) form the Peptidase M12B domain. 3 disulfide bridges follow: C118–C198, C158–C182, and C160–C165. H143 serves as a coordination point for Zn(2+). Residue E144 is part of the active site. Residues H147 and H153 each coordinate Zn(2+).

This sequence belongs to the venom metalloproteinase (M12B) family. P-I subfamily. As to quaternary structure, monomer. Requires Zn(2+) as cofactor. Expressed by the venom gland.

The protein localises to the secreted. The enzyme catalyses Hydrolysis of 14-Ala-|-Leu-15 in insulin B chain and 413-Lys-|-Leu-414 in alpha-chain of fibrinogen.. Its activity is regulated as follows. Is inhibited by EDTA, o-phenanthroline and tetraethylenepentamine. Its function is as follows. Snake venom zinc metalloprotease that exhibits direct fibrinolytic activity. The sequence is that of Snake venom metalloproteinase fibrolase from Agkistrodon contortrix contortrix (Southern copperhead).